Consider the following 975-residue polypeptide: Importin-11 (975 aa).

At methionine 1 the chain carries N-acetylmethionine. Residues 28–100 (AEEQLKQWET…RAGLITNFNE (73 aa)) form the Importin N-terminal domain. HEAT repeat units lie at residues 123–160 (RQWPELIPTLIESVKVQDDLRQHRALLTFYHVTKTLAS), 209–248 (ERTLLSLKVLRKLTVNGFVEPHKNMEVMGFLHGIFERLKQ), 318–356 (VQCMNLIKMIVKNYAYKPSKNFEDSSPETLEAHKIKMAF), 422–459 (QTLTPVLLEMMQTLQGPTNVEDMNALLIKDAVYNAVGL), 473–509 (WFKNQLLPELQVIHNRYKPLRRRVIWLIGQWISVKFK), 511–548 (DLRPMLYEAICNLLQDQDLVVRIETATTLKLTVDDFEF), 555–593 (PYLETMFTLLFQLLQQVTECDTKMHVLHVLSCVIERVNM), 600–636 (GCLVQYLPLLWKQSEEHNMLRCAILTTLIHLVQGLGA), 640–677 (NLYPFLLPVIQLSTDVSQPPHVYLLEDGLELWLVTLEN), 683–720 (PELLRIFQNMSPLLELSSENLRTCFKIINGYIFLSSTE), 743–764 (EGQVQVLKVVENALKVNPILGP), 765–804 (QMFQPILPYVFKGIIEGERYPVVMSTYLGVMGRVLLQNTS), 819–849 (QEMDQLLGNMIEMWVDRMDNITQPERRKLSA), 850–887 (LALLSLLPSDNSVIQDKFCGIINISVEGLHDVMTEDPE), and 957–974 (METVDTEIVTQLQEFLQG). Phosphoserine is present on serine 343.

Belongs to the importin beta family. Interacts with UBE2E3 and RPL12.

It localises to the cytoplasm. The protein resides in the nucleus. Its function is as follows. Functions in nuclear protein import as nuclear transport receptor. Serves as receptor for nuclear localization signals (NLS) in cargo substrates. Is thought to mediate docking of the importin/substrate complex to the nuclear pore complex (NPC) through binding to nucleoporin and the complex is subsequently translocated through the pore by an energy requiring, Ran-dependent mechanism. At the nucleoplasmic side of the NPC, Ran binds to the importin, the importin/substrate complex dissociates and importin is re-exported from the nucleus to the cytoplasm where GTP hydrolysis releases Ran. The directionality of nuclear import is thought to be conferred by an asymmetric distribution of the GTP- and GDP-bound forms of Ran between the cytoplasm and nucleus. Mediates the nuclear import of UBE2E3, and of RPL12. This Homo sapiens (Human) protein is Importin-11 (IPO11).